Consider the following 147-residue polypeptide: Endoribonuclease YbeY (147 aa).

Zn(2+)-binding residues include His-108, His-112, and His-118.

Belongs to the endoribonuclease YbeY family. It depends on Zn(2+) as a cofactor.

It is found in the cytoplasm. Functionally, single strand-specific metallo-endoribonuclease involved in late-stage 70S ribosome quality control and in maturation of the 3' terminus of the 16S rRNA. This chain is Endoribonuclease YbeY, found in Sulfurovum sp. (strain NBC37-1).